Here is a 117-residue protein sequence, read N- to C-terminus: Large ribosomal subunit protein bL20 (117 aa).

It belongs to the bacterial ribosomal protein bL20 family.

Its function is as follows. Binds directly to 23S ribosomal RNA and is necessary for the in vitro assembly process of the 50S ribosomal subunit. It is not involved in the protein synthesizing functions of that subunit. The chain is Large ribosomal subunit protein bL20 from Pasteurella multocida (strain Pm70).